The sequence spans 328 residues: Phosphate acyltransferase (328 aa).

This sequence belongs to the PlsX family. Homodimer. Probably interacts with PlsY.

The protein resides in the cytoplasm. It catalyses the reaction a fatty acyl-[ACP] + phosphate = an acyl phosphate + holo-[ACP]. It participates in lipid metabolism; phospholipid metabolism. Functionally, catalyzes the reversible formation of acyl-phosphate (acyl-PO(4)) from acyl-[acyl-carrier-protein] (acyl-ACP). This enzyme utilizes acyl-ACP as fatty acyl donor, but not acyl-CoA. This chain is Phosphate acyltransferase, found in Campylobacter jejuni subsp. jejuni serotype O:6 (strain 81116 / NCTC 11828).